The following is a 292-amino-acid chain: Probable ABC transporter permease protein YurN (292 aa).

6 helical membrane-spanning segments follow: residues Ile7 to Ile27, Val70 to Val90, Val106 to Tyr126, Val160 to Ile180, Phe215 to Leu235, and Met260 to Leu280. The region spanning Leu66–Gln282 is the ABC transmembrane type-1 domain.

It belongs to the binding-protein-dependent transport system permease family. MalFG subfamily.

Its subcellular location is the cell membrane. Its function is as follows. Probably part of the binding-protein-dependent transport system YurMNO. Probably responsible for the translocation of the substrate across the membrane. This chain is Probable ABC transporter permease protein YurN (yurN), found in Bacillus subtilis (strain 168).